A 358-amino-acid polypeptide reads, in one-letter code: 3-isopropylmalate dehydrogenase (358 aa).

Substrate contacts are provided by Arg-92, Arg-102, Arg-130, and Asp-224. Mg(2+) is bound by residues Asp-224, Asp-248, and Asp-252. An NAD(+)-binding site is contributed by 282 to 294; sequence GSAPDIAGQGIAN.

Belongs to the isocitrate and isopropylmalate dehydrogenases family. LeuB type 1 subfamily. In terms of assembly, homodimer. Requires Mg(2+) as cofactor. Mn(2+) serves as cofactor.

Its subcellular location is the cytoplasm. It catalyses the reaction (2R,3S)-3-isopropylmalate + NAD(+) = 4-methyl-2-oxopentanoate + CO2 + NADH. It participates in amino-acid biosynthesis; L-leucine biosynthesis; L-leucine from 3-methyl-2-oxobutanoate: step 3/4. Its function is as follows. Catalyzes the oxidation of 3-carboxy-2-hydroxy-4-methylpentanoate (3-isopropylmalate) to 3-carboxy-4-methyl-2-oxopentanoate. The product decarboxylates to 4-methyl-2 oxopentanoate. The protein is 3-isopropylmalate dehydrogenase of Bordetella avium (strain 197N).